Reading from the N-terminus, the 805-residue chain is Leucine--tRNA ligase (805 aa).

A 'HIGH' region motif is present at residues 40-51 (PYPSGSGLHVGH). Residues 576–580 (KMSKS) carry the 'KMSKS' region motif. Lys579 contributes to the ATP binding site.

This sequence belongs to the class-I aminoacyl-tRNA synthetase family.

It is found in the cytoplasm. The enzyme catalyses tRNA(Leu) + L-leucine + ATP = L-leucyl-tRNA(Leu) + AMP + diphosphate. The sequence is that of Leucine--tRNA ligase from Chlorobium luteolum (strain DSM 273 / BCRC 81028 / 2530) (Pelodictyon luteolum).